A 134-amino-acid polypeptide reads, in one-letter code: Acyl carrier protein, mitochondrial (134 aa).

Residues 1–46 (MFRTAALTAARVARPAVASAVRAGVARPAFVQAVPKVAAFQAVRFY) constitute a mitochondrion transit peptide. In terms of domain architecture, Carrier spans 55-131 (DEVFSRIAQV…KAVEYILSQP (77 aa)). An O-(pantetheine 4'-phosphoryl)serine modification is found at Ser-91.

This sequence belongs to the acyl carrier protein (ACP) family. In terms of assembly, complex I is composed of about 30 different subunits. Post-translationally, 4'-phosphopantetheine is transferred from CoA to a specific serine of apo-ACP by acpS. This modification is essential for activity because fatty acids are bound in thioester linkage to the sulfhydryl of the prosthetic group.

Its subcellular location is the mitochondrion. It functions in the pathway lipid metabolism; fatty acid biosynthesis. Functionally, carrier of the growing fatty acid chain in fatty acid biosynthesis. May be involved in the synthesis of very-long-chain fatty acids. Accessory and non-catalytic subunit of the mitochondrial membrane respiratory chain NADH dehydrogenase (Complex I), which functions in the transfer of electrons from NADH to the respiratory chain. This chain is Acyl carrier protein, mitochondrial (nuo-12), found in Neurospora crassa (strain ATCC 24698 / 74-OR23-1A / CBS 708.71 / DSM 1257 / FGSC 987).